A 491-amino-acid polypeptide reads, in one-letter code: MNYFNKLCFRKRINEIKKCRFMKENEFKNENKILKNKKIVIVGCGSQGLNQALNMRDSGLNISFALKKNSILRKNSSWLNATKNNFEVNDYESLIPNADLVINLTPDKQHENVVKELQKLMKKNSCLGYSHGFNIVECGEIIRKDITVVMVAPKCPGTEVREEFKRGFGVPTLIAVHTENDPKKIGLEIAKAWAFSTGGHRAGVLESSFIAEVKSDLMGEQTILCGLLQTASLICYEKLIKDKHNPSYAAKLIQYGWETITESLKHGGITLMMDRLSNPSKIKAFKISKKIKKILSPLFKKHMDDIISGSFSKEMMIDWHNNDKKLLNWREDTKKTPFEKNILSYSEKISEQEYYDHGTLMVSILKSGIELAFETMINTGIINESAYYESLHELPLIANTIARKKLYEMNIVISDTAEYGSYLFSEAAYPILKDFIMSLEKNVLGLSLPNTKIDNIELYKINEEIRNHPIEIVGKKLRKHMKEMKSICVAK.

Positions 16–207 (IKKCRFMKEN…GGHRAGVLES (192 aa)) constitute a KARI N-terminal Rossmann domain. Residues 44–47 (CGSQ), lysine 67, serine 77, and 107–109 (DKQ) contribute to the NADP(+) site. Residue histidine 131 is part of the active site. Glycine 157 provides a ligand contact to NADP(+). 2 consecutive KARI C-terminal knotted domains span residues 208-344 (SFIA…NILS) and 345-484 (YSEK…MKEM). Aspartate 216, glutamate 220, glutamate 389, and glutamate 393 together coordinate Mg(2+). Serine 414 contributes to the substrate binding site.

This sequence belongs to the ketol-acid reductoisomerase family. The cofactor is Mg(2+).

It catalyses the reaction (2R)-2,3-dihydroxy-3-methylbutanoate + NADP(+) = (2S)-2-acetolactate + NADPH + H(+). It carries out the reaction (2R,3R)-2,3-dihydroxy-3-methylpentanoate + NADP(+) = (S)-2-ethyl-2-hydroxy-3-oxobutanoate + NADPH + H(+). The protein operates within amino-acid biosynthesis; L-isoleucine biosynthesis; L-isoleucine from 2-oxobutanoate: step 2/4. Its pathway is amino-acid biosynthesis; L-valine biosynthesis; L-valine from pyruvate: step 2/4. Its function is as follows. Involved in the biosynthesis of branched-chain amino acids (BCAA). Catalyzes an alkyl-migration followed by a ketol-acid reduction of (S)-2-acetolactate (S2AL) to yield (R)-2,3-dihydroxy-isovalerate. In the isomerase reaction, S2AL is rearranged via a Mg-dependent methyl migration to produce 3-hydroxy-3-methyl-2-ketobutyrate (HMKB). In the reductase reaction, this 2-ketoacid undergoes a metal-dependent reduction by NADPH to yield (R)-2,3-dihydroxy-isovalerate. This Buchnera aphidicola subsp. Schizaphis graminum (strain Sg) protein is Ketol-acid reductoisomerase (NADP(+)).